Here is a 324-residue protein sequence, read N- to C-terminus: Adipolin (324 aa).

The signal sequence occupies residues 1-24 (MRCWVWLLVAIVLCQQLSVVRVLA). 2 disordered regions span residues 28-66 (ERKK…DPGL) and 83-121 (GANS…MPGA). The span at 40-49 (EPFNVSLSNS) shows a compositional bias: polar residues. Asn43 carries N-linked (GlcNAc...) asparagine glycosylation. Residues 50-60 (EELHETDKLSE) show a composition bias toward basic and acidic residues. Over residues 86–98 (SKKKCKGKDKKLR) the composition is skewed to basic residues. Over residues 103–118 (PPGPPGPQGPPGPPGM) the composition is skewed to pro residues. The region spanning 169-324 (YRRVDEGFHC…SDFMGILMGL (156 aa)) is the C1q domain.

The protein belongs to the adipolin/erythroferrone family. Homomultimer; disulfide-linked.

It is found in the secreted. Its function is as follows. Insulin-sensitizing adipocyte-secreted protein (adipokine) that regulates glucose metabolism in liver and adipose tissue. The protein is Adipolin (c1qtnf12) of Xenopus tropicalis (Western clawed frog).